The chain runs to 191 residues: Orotate phosphoribosyltransferase (191 aa).

116-124 (EDVVTTGGS) provides a ligand contact to 5-phospho-alpha-D-ribose 1-diphosphate. The orotate site is built by T120 and R148.

It belongs to the purine/pyrimidine phosphoribosyltransferase family. PyrE subfamily. Homodimer. Mg(2+) serves as cofactor.

The enzyme catalyses orotidine 5'-phosphate + diphosphate = orotate + 5-phospho-alpha-D-ribose 1-diphosphate. The protein operates within pyrimidine metabolism; UMP biosynthesis via de novo pathway; UMP from orotate: step 1/2. In terms of biological role, catalyzes the transfer of a ribosyl phosphate group from 5-phosphoribose 1-diphosphate to orotate, leading to the formation of orotidine monophosphate (OMP). The chain is Orotate phosphoribosyltransferase from Heliobacterium modesticaldum (strain ATCC 51547 / Ice1).